A 911-amino-acid chain; its full sequence is Nitrate reductase [NADH] (911 aa).

Polar residues predominate over residues 1 to 10 (MAASVENRQY). The tract at residues 1–71 (MAASVENRQY…SEDEDDDDEK (71 aa)) is disordered. The segment covering 61 to 71 (SSEDEDDDDEK) has biased composition (acidic residues). Cysteine 188 is a binding site for Mo-molybdopterin. The Cytochrome b5 heme-binding domain occupies 536 to 611 (SKMYSMSEVR…LEDFRIGELI (76 aa)). Heme is bound by residues histidine 571 and histidine 594. Residues 654-766 (REKIPCKLVD…KGPLGHIEYQ (113 aa)) form the FAD-binding FR-type domain. FAD is bound by residues 706-709 (RAYT), 723-727 (VVKIY), phenylalanine 728, phenylalanine 735, 740-742 (QMS), and threonine 793.

It belongs to the nitrate reductase family. Homodimer. FAD serves as cofactor. It depends on heme as a cofactor. Mo-molybdopterin is required as a cofactor.

The catalysed reaction is nitrite + NAD(+) + H2O = nitrate + NADH + H(+). Functionally, nitrate reductase is a key enzyme involved in the first step of nitrate assimilation in plants, fungi and bacteria. This chain is Nitrate reductase [NADH] (NIA), found in Solanum lycopersicum (Tomato).